Here is a 490-residue protein sequence, read N- to C-terminus: NADP-reducing hydrogenase subunit HndC (490 aa).

4Fe-4S ferredoxin-type domains are found at residues 433-462 (LTYT…GTKK) and 463-490 (QPHT…IIKQ).

This sequence belongs to the complex I 51 kDa subunit family. In terms of assembly, heterotetramer composed of HndA, HndB, HndC and HndD subunits. HndC is probably the reducing subunit.

The catalysed reaction is H2 + NADP(+) = NADPH + H(+). With respect to regulation, inhibited by oxygen. Catalyzes the reduction of NADP in the presence of molecular H2 to yield NADPH. The chain is NADP-reducing hydrogenase subunit HndC (hndC) from Solidesulfovibrio fructosivorans (Desulfovibrio fructosivorans).